A 418-amino-acid polypeptide reads, in one-letter code: Serine hydroxymethyltransferase (418 aa).

Residues L121 and 125-127 (GHL) each bind (6S)-5,6,7,8-tetrahydrofolate. K230 bears the N6-(pyridoxal phosphate)lysine mark. (6S)-5,6,7,8-tetrahydrofolate is bound at residue 356–358 (SPF).

It belongs to the SHMT family. As to quaternary structure, homodimer. It depends on pyridoxal 5'-phosphate as a cofactor.

The protein localises to the cytoplasm. The catalysed reaction is (6R)-5,10-methylene-5,6,7,8-tetrahydrofolate + glycine + H2O = (6S)-5,6,7,8-tetrahydrofolate + L-serine. The protein operates within one-carbon metabolism; tetrahydrofolate interconversion. It participates in amino-acid biosynthesis; glycine biosynthesis; glycine from L-serine: step 1/1. Its function is as follows. Catalyzes the reversible interconversion of serine and glycine with tetrahydrofolate (THF) serving as the one-carbon carrier. This reaction serves as the major source of one-carbon groups required for the biosynthesis of purines, thymidylate, methionine, and other important biomolecules. Also exhibits THF-independent aldolase activity toward beta-hydroxyamino acids, producing glycine and aldehydes, via a retro-aldol mechanism. The protein is Serine hydroxymethyltransferase of Alteromonas mediterranea (strain DSM 17117 / CIP 110805 / LMG 28347 / Deep ecotype).